The primary structure comprises 629 residues: Methyl-accepting chemotaxis protein PctB (629 aa).

The Cytoplasmic segment spans residues 1–10 (MIKSLKFSHK). A helical membrane pass occupies residues 11–31 (ILLAAALVVIATFSLFTLYND). Residues 32 to 276 (SLQRASIRED…AYAMLTKLRT (245 aa)) lie on the Periplasmic side of the membrane. The 224-residue stretch at 37-260 (SIREDLEDYL…LSGLDWYIGI (224 aa)) folds into the Cache domain. Residues Y109, S115, Y121, 126 to 128 (RPW), E146, and D173 each bind L-arginine. L-glutamine contacts are provided by residues S115, Y121, 126–128 (RPW), 144–146 (YME), and D173. The helical transmembrane segment at 277-297 (SAIVAALIAVVAIVLLLGMLI) threads the bilayer. Residues 298–352 (RVLMQPLTDMGRAMQDIAQGEGDLTKRLKVTSNDEFGALAISFNRFVERIHESIR) form the HAMP domain. At 298-629 (RVLMQPLTDM…LRQLVDSFKI (332 aa)) the chain is on the cytoplasmic side. The 237-residue stretch at 357 to 593 (TARQLHDVAQ…SLNMDITEIN (237 aa)) folds into the Methyl-accepting transducer domain. Residues 405 to 424 (RNAADASHHASDANHQAEDG) form a disordered region. Over residues 410-424 (ASHHASDANHQAEDG) the composition is skewed to basic and acidic residues.

This sequence belongs to the methyl-accepting chemotaxis (MCP) protein family. In terms of assembly, monomer in the absence and presence of ligands.

It localises to the cell inner membrane. Functionally, chemotactic-signal transducers respond to changes in the concentration of attractants and repellents in the environment, transduce a signal from the outside to the inside of the cell, and facilitate sensory adaptation through the variation of the level of methylation. Responds to L-Arg, L-Gln, L-Ala, L-Glu, L-Lys, L-Met and L-Tyr. Also involved in repellent responses to trichloroethylene (TCE), chloroform and methylthiocyanate. The sequence is that of Methyl-accepting chemotaxis protein PctB (pctB) from Pseudomonas aeruginosa (strain ATCC 15692 / DSM 22644 / CIP 104116 / JCM 14847 / LMG 12228 / 1C / PRS 101 / PAO1).